We begin with the raw amino-acid sequence, 629 residues long: tRNA uridine 5-carboxymethylaminomethyl modification enzyme MnmG (629 aa).

13–18 (GGGHAG) contributes to the FAD binding site. An NAD(+)-binding site is contributed by 273-287 (GPRYCPSIEDKINRF).

It belongs to the MnmG family. As to quaternary structure, homodimer. Heterotetramer of two MnmE and two MnmG subunits. The cofactor is FAD.

It localises to the cytoplasm. In terms of biological role, NAD-binding protein involved in the addition of a carboxymethylaminomethyl (cmnm) group at the wobble position (U34) of certain tRNAs, forming tRNA-cmnm(5)s(2)U34. This is tRNA uridine 5-carboxymethylaminomethyl modification enzyme MnmG from Shewanella piezotolerans (strain WP3 / JCM 13877).